Here is a 103-residue protein sequence, read N- to C-terminus: Conantokin-Br (103 aa).

The N-terminal stretch at 1-21 is a signal peptide; that stretch reads MQLYTYLYLLVPLVTFHLILG. Residues 22-79 constitute a propeptide that is removed on maturation; that stretch reads TGTLDHGGALTERRSTDATALKPEPVLQKSAARSTDDNGKDRLTQMKRILKKRGKNAR. The tract at residues 34–64 is disordered; it reads RRSTDATALKPEPVLQKSAARSTDDNGKDRL. Positions 55–64 are enriched in basic and acidic residues; that stretch reads STDDNGKDRL. 4 positions are modified to 4-carboxyglutamate: E82, E83, E89, and E93. A divalent metal cation is bound by residues E89 and E93.

This sequence belongs to the conotoxin B superfamily. The cofactor is Ca(2+). It depends on Mg(2+) as a cofactor. As to expression, expressed by the venom duct.

It localises to the secreted. Its function is as follows. Conantokins inhibit N-methyl-D-aspartate (NMDA) receptors. This toxin inhibits NR2 subunits N-methyl-D-aspartate (NMDA) receptor-mediated calcium influx in central nervous system neurons in the following order of preference: NR2B/GRIN2B (IC(50)=0.14 uM), NR2D/GRIN2D (IC(50)=0.31 uM), NR2A/GRIN2A (IC(50)=0.68 uM) and NR2C/GRIN2A (IC(50)=4.9 uM), when tested on rat receptors. This chain is Conantokin-Br, found in Conus sulcatus (Sulcate cone).